A 1409-amino-acid polypeptide reads, in one-letter code: DNA-directed RNA polymerase subunit beta' (1409 aa).

Zn(2+) is bound by residues C70, C72, C85, and C88. 3 residues coordinate Mg(2+): D461, D463, and D465. 4 residues coordinate Zn(2+): C820, C894, C901, and C904.

Belongs to the RNA polymerase beta' chain family. In terms of assembly, the RNAP catalytic core consists of 2 alpha, 1 beta, 1 beta' and 1 omega subunit. When a sigma factor is associated with the core the holoenzyme is formed, which can initiate transcription. Requires Mg(2+) as cofactor. The cofactor is Zn(2+).

The enzyme catalyses RNA(n) + a ribonucleoside 5'-triphosphate = RNA(n+1) + diphosphate. DNA-dependent RNA polymerase catalyzes the transcription of DNA into RNA using the four ribonucleoside triphosphates as substrates. In Ralstonia nicotianae (strain ATCC BAA-1114 / GMI1000) (Ralstonia solanacearum), this protein is DNA-directed RNA polymerase subunit beta'.